The sequence spans 307 residues: Probable porphobilinogen deaminase (307 aa).

Cysteine 240 carries the post-translational modification S-(dipyrrolylmethanemethyl)cysteine.

The protein belongs to the HMBS family. Dipyrromethane is required as a cofactor.

The enzyme catalyses 4 porphobilinogen + H2O = hydroxymethylbilane + 4 NH4(+). It participates in porphyrin-containing compound metabolism; protoporphyrin-IX biosynthesis; coproporphyrinogen-III from 5-aminolevulinate: step 2/4. Functionally, tetrapolymerization of the monopyrrole PBG into the hydroxymethylbilane pre-uroporphyrinogen in several discrete steps. This is Probable porphobilinogen deaminase (hemC) from Aeropyrum pernix (strain ATCC 700893 / DSM 11879 / JCM 9820 / NBRC 100138 / K1).